We begin with the raw amino-acid sequence, 328 residues long: Tetraacyldisaccharide 4'-kinase (328 aa).

ATP is bound at residue 55–62; that stretch reads TAGGNGKT.

This sequence belongs to the LpxK family.

The catalysed reaction is a lipid A disaccharide + ATP = a lipid IVA + ADP + H(+). It functions in the pathway glycolipid biosynthesis; lipid IV(A) biosynthesis; lipid IV(A) from (3R)-3-hydroxytetradecanoyl-[acyl-carrier-protein] and UDP-N-acetyl-alpha-D-glucosamine: step 6/6. Transfers the gamma-phosphate of ATP to the 4'-position of a tetraacyldisaccharide 1-phosphate intermediate (termed DS-1-P) to form tetraacyldisaccharide 1,4'-bis-phosphate (lipid IVA). This chain is Tetraacyldisaccharide 4'-kinase, found in Escherichia coli (strain SMS-3-5 / SECEC).